Reading from the N-terminus, the 419-residue chain is Variant surface glycoprotein YnAT 1.1 (419 aa).

An N-terminal signal peptide occupies residues 1–28; the sequence is MKRVLSNVLKAWIFTIVAFHNFSTSVTA. Residues asparagine 82 and asparagine 358 are each glycosylated (N-linked (GlcNAc...) asparagine). Residues 369 to 405 form a disordered region; sequence ESSRPPSTDANTSQKGPLQRPEKSGESSHLPSGSSHG. The segment covering 372 to 384 has biased composition (polar residues); that stretch reads RPPSTDANTSQKG. N-linked (GlcNAc...) (high mannose) asparagine glycosylation occurs at asparagine 379. Positions 395–405 are enriched in low complexity; sequence SSHLPSGSSHG. Serine 400 carries the GPI-anchor amidated serine lipid modification. Positions 401–419 are cleaved as a propeptide — removed in mature form; sequence GSSHGTKAIRSILHVALLM.

It is found in the cell membrane. Its function is as follows. VSG forms a coat on the surface of the parasite. The trypanosome evades the immune response of the host by expressing a series of antigenically distinct VSGs from an estimated 1000 VSG genes. This Trypanosoma congolense protein is Variant surface glycoprotein YnAT 1.1.